Here is a 555-residue protein sequence, read N- to C-terminus: Membrane protein insertase YidC (555 aa).

Residues 7-24 (ILWVIFSMSLVLLYDNWQ) traverse the membrane as a helical segment. Composition is skewed to low complexity over residues 40–54 (QQAA…TPQA) and 64–81 (AAPG…QPVG). Residues 40-81 (QQAAPAGAGGATPQADVPKANATNAAPGTVPAAPQAAAQPVG) form a disordered region. Helical transmembrane passes span 334–354 (LELV…FWLL), 360–380 (FLGN…LVFF), 430–450 (LGGC…YWVL), 468–488 (LSVP…MFVQ), and 503–523 (VMMI…AGLV).

This sequence belongs to the OXA1/ALB3/YidC family. Type 1 subfamily. In terms of assembly, interacts with the Sec translocase complex via SecD. Specifically interacts with transmembrane segments of nascent integral membrane proteins during membrane integration.

The protein localises to the cell inner membrane. In terms of biological role, required for the insertion and/or proper folding and/or complex formation of integral membrane proteins into the membrane. Involved in integration of membrane proteins that insert both dependently and independently of the Sec translocase complex, as well as at least some lipoproteins. Aids folding of multispanning membrane proteins. The polypeptide is Membrane protein insertase YidC (Cupriavidus metallidurans (strain ATCC 43123 / DSM 2839 / NBRC 102507 / CH34) (Ralstonia metallidurans)).